The following is a 513-amino-acid chain: ATP synthase subunit alpha (513 aa).

169–176 (GDRQCGKT) is a binding site for ATP.

Belongs to the ATPase alpha/beta chains family. In terms of assembly, F-type ATPases have 2 components, CF(1) - the catalytic core - and CF(0) - the membrane proton channel. CF(1) has five subunits: alpha(3), beta(3), gamma(1), delta(1), epsilon(1). CF(0) has three main subunits: a(1), b(2) and c(9-12). The alpha and beta chains form an alternating ring which encloses part of the gamma chain. CF(1) is attached to CF(0) by a central stalk formed by the gamma and epsilon chains, while a peripheral stalk is formed by the delta and b chains.

The protein resides in the cell inner membrane. The enzyme catalyses ATP + H2O + 4 H(+)(in) = ADP + phosphate + 5 H(+)(out). Its function is as follows. Produces ATP from ADP in the presence of a proton gradient across the membrane. The alpha chain is a regulatory subunit. The sequence is that of ATP synthase subunit alpha from Burkholderia vietnamiensis (strain G4 / LMG 22486) (Burkholderia cepacia (strain R1808)).